The primary structure comprises 174 residues: Ribosome maturation factor RimP (174 aa).

The protein belongs to the RimP family.

It is found in the cytoplasm. Functionally, required for maturation of 30S ribosomal subunits. The protein is Ribosome maturation factor RimP of Bdellovibrio bacteriovorus (strain ATCC 15356 / DSM 50701 / NCIMB 9529 / HD100).